The primary structure comprises 226 residues: UPF0758 protein gbs1168 (226 aa).

The 123-residue stretch at Gln-103 to Ile-225 folds into the MPN domain. The Zn(2+) site is built by His-174, His-176, and Asp-187. Residues His-174–Asp-187 carry the JAMM motif motif.

It belongs to the UPF0758 family.

This is UPF0758 protein gbs1168 from Streptococcus agalactiae serotype III (strain NEM316).